The sequence spans 438 residues: Enolase (438 aa).

Residues histidine 159 and glutamate 168 each contribute to the substrate site. The active-site Proton donor is the glutamate 211. Mg(2+) is bound by residues aspartate 246, glutamate 297, and aspartate 322. Substrate-binding residues include glutamate 297 and aspartate 322. Lysine 347 functions as the Proton acceptor in the catalytic mechanism. Substrate contacts are provided by residues 374–377 (SHRS) and lysine 398.

The protein belongs to the enolase family. As to quaternary structure, homodimer. Requires Mg(2+) as cofactor.

The protein resides in the cytoplasm. The catalysed reaction is (2R)-2-phosphoglycerate = phosphoenolpyruvate + H2O. Its pathway is carbohydrate degradation; glycolysis; pyruvate from D-glyceraldehyde 3-phosphate: step 4/5. This Neurospora crassa (strain ATCC 24698 / 74-OR23-1A / CBS 708.71 / DSM 1257 / FGSC 987) protein is Enolase (emp-7).